A 502-amino-acid polypeptide reads, in one-letter code: mRNA cap guanine-N(7) methyltransferase (502 aa).

The segment at 1-118 is disordered; it reads MADENPQAQG…SQQEEAMRFS (118 aa). Positions 93–115 are enriched in basic and acidic residues; it reads LVDRETLRRRQEERERSQQEEAM. In terms of domain architecture, mRNA cap 0 methyltransferase spans 146 to 502; that stretch reads SKIKGLRSFN…FYHAFCFYKV (357 aa). Residue 155-156 coordinates mRNA; that stretch reads NN. Residues Lys159, Gly202, Asp226, Asp264, 307 to 309, and Tyr312 each bind S-adenosyl-L-methionine; that span reads MFT. Residues 360-369 are compositionally biased toward basic and acidic residues; sequence ERETAAKKEE. The tract at residues 360–381 is disordered; it reads ERETAAKKEEAEPEDGEVEEDD. Acidic residues predominate over residues 370–381; that stretch reads AEPEDGEVEEDD.

It belongs to the class I-like SAM-binding methyltransferase superfamily. mRNA cap 0 methyltransferase family.

The protein resides in the nucleus. The catalysed reaction is a 5'-end (5'-triphosphoguanosine)-ribonucleoside in mRNA + S-adenosyl-L-methionine = a 5'-end (N(7)-methyl 5'-triphosphoguanosine)-ribonucleoside in mRNA + S-adenosyl-L-homocysteine. Functionally, responsible for methylating the 5'-cap structure of mRNAs. This chain is mRNA cap guanine-N(7) methyltransferase (abd1), found in Aspergillus oryzae (strain ATCC 42149 / RIB 40) (Yellow koji mold).